Here is a 412-residue protein sequence, read N- to C-terminus: Autophagy-related protein 34 (412 aa).

The segment at 246–348 (NDPLLHVEVS…SNEITLKSPL (103 aa)) is AMS1-binding.

In terms of assembly, interacts with AMS1, ATG8 and ATG11.

Its subcellular location is the preautophagosomal structure membrane. Its function is as follows. Cargo-receptor protein involved in the cytoplasm to vacuole transport (Cvt) and in autophagy. Recognizes cargo proteins, such as AMS1 and delivers them to the pre-autophagosomal structure for eventual engulfment by the autophagosome and targeting to the vacuole. This Saccharomyces cerevisiae (strain ATCC 204508 / S288c) (Baker's yeast) protein is Autophagy-related protein 34 (ATG34).